Reading from the N-terminus, the 402-residue chain is Diaminopimelate decarboxylase (402 aa).

K45 is modified (N6-(pyridoxal phosphate)lysine). Pyridoxal 5'-phosphate is bound by residues G224 and 259–262 (EPGR). Residues R262, R298, and Y302 each contribute to the substrate site. The active-site Proton donor is C327. 2 residues coordinate substrate: E328 and Y356. Pyridoxal 5'-phosphate is bound at residue Y356.

It belongs to the Orn/Lys/Arg decarboxylase class-II family. LysA subfamily. As to quaternary structure, homodimer. The cofactor is pyridoxal 5'-phosphate.

It catalyses the reaction meso-2,6-diaminopimelate + H(+) = L-lysine + CO2. It functions in the pathway amino-acid biosynthesis; L-lysine biosynthesis via DAP pathway; L-lysine from DL-2,6-diaminopimelate: step 1/1. Its function is as follows. Specifically catalyzes the decarboxylation of meso-diaminopimelate (meso-DAP) to L-lysine. This Campylobacter jejuni subsp. jejuni serotype O:2 (strain ATCC 700819 / NCTC 11168) protein is Diaminopimelate decarboxylase.